The sequence spans 505 residues: Phosphoglycerate kinase, glycosomal (505 aa).

(2R)-3-phosphoglycerate-binding residues include Val29, Asp30, Phe31, Asn32, Arg45, Ser67, His68, Gly70, Arg71, Leu219, Arg220, His256, and Arg257. ADP-binding residues include Gly302 and Ala303. Gly302 is a CDP binding site. Positions 303 and 304 each coordinate AMP. Residue Ala303 participates in ATP binding. Ala303 lines the Mg(2+) pocket. Lys304 provides a ligand contact to (2R)-3-phosphoglycerate. Asp307 contacts CDP. Asp307 is a Mg(2+) binding site. Positions 308 and 326 each coordinate ADP. Residue Lys308 participates in AMP binding. Lys308 provides a ligand contact to ATP. A CDP-binding site is contributed by Gly326. The AMP site is built by Gly327 and Gly399. 2 residues coordinate ATP: Gly327 and Gly399. Positions 399 and 423 each coordinate ADP. CDP is bound by residues Gly424, Leu426, and Phe429. ADP-binding residues include Phe429, Glu430, Asp462, and Thr463. Glu430 lines the AMP pocket. The ATP site is built by Glu430, Asp462, and Thr463. Asp462 contacts Mg(2+).

This sequence belongs to the phosphoglycerate kinase family. In terms of assembly, monomer. Mg(2+) is required as a cofactor.

The protein resides in the glycosome. It carries out the reaction (2R)-3-phosphoglycerate + ATP = (2R)-3-phospho-glyceroyl phosphate + ADP. Its pathway is carbohydrate degradation; glycolysis; pyruvate from D-glyceraldehyde 3-phosphate: step 2/5. The polypeptide is Phosphoglycerate kinase, glycosomal (PGKA) (Crithidia fasciculata).